The chain runs to 423 residues: Proline racemase A (423 aa).

The N-terminal stretch at 1 to 31 (MRKSVCPKQKFFFSAFPFFFFFCVFPLISRT) is a signal peptide. Cys160 functions as the Proton acceptor in the catalytic mechanism. 161 to 162 (GH) serves as a coordination point for substrate. N-linked (GlcNAc...) asparagine glycans are attached at residues Asn213, Asn266, and Asn282. Asp326 is a substrate binding site. Catalysis depends on Cys330, which acts as the Proton donor. 331–332 (GT) provides a ligand contact to substrate.

Belongs to the proline racemase family. As to quaternary structure, homodimer.

The protein localises to the secreted. The protein resides in the membrane. It localises to the cytoplasm. The catalysed reaction is L-proline = D-proline. With respect to regulation, inhibited by maleic acid, iodoacetamide, iodoacetate and, most particularly, pyrrole-2-carboxylic acid. In terms of biological role, catalyzes the interconversion of L- and D-proline. Secreted isoform 1 contributes to parasite immune evasion by acting as a B-cell mitogen. Probably involved in parasite differentiation and infectivity. This is Proline racemase A (PA45-A) from Trypanosoma cruzi (strain CL Brener).